A 215-amino-acid polypeptide reads, in one-letter code: Cytochrome b6 (215 aa).

Residues 32-52 (IFYCLGGITLTCFLVQVATGF) traverse the membrane as a helical segment. Residue cysteine 35 participates in heme c binding. Heme b is bound by residues histidine 86 and histidine 100. Transmembrane regions (helical) follow at residues 90–110 (ASMM…TGGF), 116–136 (LTWV…VTGY), and 186–206 (LHTF…FSMI). Residues histidine 187 and histidine 202 each contribute to the heme b site.

It belongs to the cytochrome b family. PetB subfamily. The 4 large subunits of the cytochrome b6-f complex are cytochrome b6, subunit IV (17 kDa polypeptide, PetD), cytochrome f and the Rieske protein, while the 4 small subunits are PetG, PetL, PetM and PetN. The complex functions as a dimer. It depends on heme b as a cofactor. Heme c serves as cofactor.

It is found in the plastid. The protein localises to the chloroplast thylakoid membrane. Functionally, component of the cytochrome b6-f complex, which mediates electron transfer between photosystem II (PSII) and photosystem I (PSI), cyclic electron flow around PSI, and state transitions. In Lotus japonicus (Lotus corniculatus var. japonicus), this protein is Cytochrome b6.